A 193-amino-acid polypeptide reads, in one-letter code: Thioredoxin peroxidase (193 aa).

Positions 3–161 constitute a Thioredoxin domain; sequence AVVGKLAPSF…ALRLLDAFQF (159 aa). C48 (cysteine sulfenic acid (-SOH) intermediate) is an active-site residue.

The protein belongs to the peroxiredoxin family. AhpC/Prx1 subfamily. Homodimer; disulfide-linked, upon oxidation.

It carries out the reaction a hydroperoxide + [thioredoxin]-dithiol = an alcohol + [thioredoxin]-disulfide + H2O. Its function is as follows. Thiol-specific peroxidase that catalyzes the reduction of hydrogen peroxide and organic hydroperoxides to water and alcohols, respectively. Plays a role in cell protection against oxidative stress by detoxifying peroxides and as sensor of hydrogen peroxide-mediated signaling events. This Echinococcus granulosus (Hydatid tapeworm) protein is Thioredoxin peroxidase (TPX).